We begin with the raw amino-acid sequence, 547 residues long: Flagellar hook-associated protein 1 (547 aa).

Belongs to the flagella basal body rod proteins family.

The protein localises to the secreted. It localises to the bacterial flagellum. In Escherichia coli (strain K12), this protein is Flagellar hook-associated protein 1 (flgK).